A 265-amino-acid polypeptide reads, in one-letter code: tRNA (guanine-N(1)-)-methyltransferase (265 aa).

Residues Gly119 and 139–144 each bind S-adenosyl-L-methionine; that span reads IGDYVL.

It belongs to the RNA methyltransferase TrmD family. As to quaternary structure, homodimer.

Its subcellular location is the cytoplasm. It catalyses the reaction guanosine(37) in tRNA + S-adenosyl-L-methionine = N(1)-methylguanosine(37) in tRNA + S-adenosyl-L-homocysteine + H(+). Specifically methylates guanosine-37 in various tRNAs. The chain is tRNA (guanine-N(1)-)-methyltransferase from Alcanivorax borkumensis (strain ATCC 700651 / DSM 11573 / NCIMB 13689 / SK2).